We begin with the raw amino-acid sequence, 156 residues long: C-type lectin lectoxin-Phi1 (156 aa).

Positions 1-23 (MGRFIFVSLGLLVLAFSLSGIGA) are cleaved as a signal peptide. 3 disulfide bridges follow: cysteine 27–cysteine 38, cysteine 55–cysteine 154, and cysteine 129–cysteine 146. Residues 34 to 155 (HNVSCYKLIN…CNRRHRFLCK (122 aa)) form the C-type lectin domain. 2 N-linked (GlcNAc...) asparagine glycosylation sites follow: asparagine 35 and asparagine 109. Residues 119–121 (EPN) carry the Mannose-binding motif. Residues glutamate 127, asparagine 142, and aspartate 143 each coordinate Ca(2+).

It belongs to the true venom lectin family. Expressed by the venom gland.

The protein localises to the secreted. Its function is as follows. Mannose-binding lectin which recognizes specific carbohydrate structures and agglutinates a variety of animal cells by binding to cell-surface glycoproteins and glycolipids. May be a calcium-dependent lectin. This is C-type lectin lectoxin-Phi1 from Philodryas olfersii (Green snake).